The sequence spans 111 residues: Viscotoxin-A3 (111 aa).

Residues 1–26 (MEVVRGSSLVLLVLLLGALLVSQVES) form the signal peptide. 3 cysteine pairs are disulfide-bonded: cysteine 29–cysteine 66, cysteine 30–cysteine 58, and cysteine 42–cysteine 52. Positions 73 to 111 (FYCTLGCESSQCATNSNGDAEAVRCKTACSDLCQDVDDA) are cleaved as a propeptide — acidic domain.

Belongs to the plant thionin (TC 1.C.44) family.

Its subcellular location is the secreted. Its function is as follows. Thionins are small plant proteins which are toxic to animal cells. They seem to exert their toxic effect at the level of the cell membrane. Their precise function is not known. The protein is Viscotoxin-A3 (THI2.1) of Viscum album (European mistletoe).